Here is a 200-residue protein sequence, read N- to C-terminus: Glycerol-3-phosphate acyltransferase (200 aa).

5 consecutive transmembrane segments (helical) span residues 1–21 (MITVILIFSAYLLGSISFAVV), 51–71 (VAAAVTLLGDAGKGWVAVVVA), 84–104 (VIASAALAVFLGHLFPIFLAF), 116–136 (ILLGLNLWLGILAILTWIIVA), and 159–179 (FLLQKEMLTITVLIISILLIL).

This sequence belongs to the PlsY family. In terms of assembly, probably interacts with PlsX.

It is found in the cell inner membrane. The catalysed reaction is an acyl phosphate + sn-glycerol 3-phosphate = a 1-acyl-sn-glycero-3-phosphate + phosphate. It participates in lipid metabolism; phospholipid metabolism. Its function is as follows. Catalyzes the transfer of an acyl group from acyl-phosphate (acyl-PO(4)) to glycerol-3-phosphate (G3P) to form lysophosphatidic acid (LPA). This enzyme utilizes acyl-phosphate as fatty acyl donor, but not acyl-CoA or acyl-ACP. This chain is Glycerol-3-phosphate acyltransferase, found in Nitrosomonas eutropha (strain DSM 101675 / C91 / Nm57).